Here is a 169-residue protein sequence, read N- to C-terminus: Ribosome maturation factor RimM (169 aa).

Residues 94-167 enclose the PRC barrel domain; sequence ENEFYFHEII…KITIEVMEGL (74 aa).

Belongs to the RimM family. In terms of assembly, binds ribosomal protein uS19.

It is found in the cytoplasm. Functionally, an accessory protein needed during the final step in the assembly of 30S ribosomal subunit, possibly for assembly of the head region. Essential for efficient processing of 16S rRNA. May be needed both before and after RbfA during the maturation of 16S rRNA. It has affinity for free ribosomal 30S subunits but not for 70S ribosomes. The sequence is that of Ribosome maturation factor RimM from Listeria monocytogenes serotype 4b (strain F2365).